The chain runs to 528 residues: MSTVNVQIGLHELLNGSNAQIQLSVPQLVEKVLMRNEGKLTSTGAVSASTGKYTGRSPKDKFIVKEASVADKIAWGAVNQPISEEHFNKLYIKVLEYLKEKEELFIFKGFAGADRNYRLPIQVVNEYAWHNLFVHQLFIRPNEEELATHESEFTIVSAPNFKADPAIDGTNSEAFIMVSFEKRIVLIGGTEYAGEMKKSIFSIMNFLLPEQDILSMHCSSNVGEEGDVALFFGLSGTGKTTLSADPNRKLIGDDEHGWSDNGVFNIEGGCYAKCVNLSHEKEPQIFDAIKFGSVLENVVIDGQTRIADYNDTTLTENTRAAYPMHAIDNIVLPSVAGHPNTIIFLTADASGVLPPISKLSKEQAMYHFLSGYTSKLAGTERGVTSPQATFSTCFGSPFLPLDASRYAEMLGEKIEKHDAKVFLVNTGWTGGEYGVGKRMNLGYTRAMIQAALSGELAKAETAKHDIFGLEVPRHVPGVPDEVLMPEQTWADKDAYKVKAIELANEFKENFKKFDSVSEAIINLGGPIA.

Residues R56, Y192, and K198 each contribute to the substrate site. ATP is bound by residues K198, H217, and 233 to 241; that span reads GLSGTGKTT. 2 residues coordinate Mn(2+): K198 and H217. Position 254 (D254) interacts with Mn(2+). Residues E282, R319, and T444 each contribute to the ATP site. Substrate is bound at residue R319.

The protein belongs to the phosphoenolpyruvate carboxykinase (ATP) family. Requires Mn(2+) as cofactor.

The protein resides in the cytoplasm. It carries out the reaction oxaloacetate + ATP = phosphoenolpyruvate + ADP + CO2. Its pathway is carbohydrate biosynthesis; gluconeogenesis. Involved in the gluconeogenesis. Catalyzes the conversion of oxaloacetate (OAA) to phosphoenolpyruvate (PEP) through direct phosphoryl transfer between the nucleoside triphosphate and OAA. In Bacillus mycoides (strain KBAB4) (Bacillus weihenstephanensis), this protein is Phosphoenolpyruvate carboxykinase (ATP).